The sequence spans 567 residues: DNA ligase B (567 aa).

The active-site N6-AMP-lysine intermediate is lysine 126.

It belongs to the NAD-dependent DNA ligase family. LigB subfamily.

It carries out the reaction NAD(+) + (deoxyribonucleotide)n-3'-hydroxyl + 5'-phospho-(deoxyribonucleotide)m = (deoxyribonucleotide)n+m + AMP + beta-nicotinamide D-nucleotide.. Its function is as follows. Catalyzes the formation of phosphodiester linkages between 5'-phosphoryl and 3'-hydroxyl groups in double-stranded DNA using NAD as a coenzyme and as the energy source for the reaction. This is DNA ligase B from Pseudomonas putida (strain W619).